Consider the following 185-residue polypeptide: Ribosome-recycling factor (185 aa).

It belongs to the RRF family.

The protein resides in the cytoplasm. Its function is as follows. Responsible for the release of ribosomes from messenger RNA at the termination of protein biosynthesis. May increase the efficiency of translation by recycling ribosomes from one round of translation to another. This chain is Ribosome-recycling factor, found in Campylobacter jejuni subsp. jejuni serotype O:2 (strain ATCC 700819 / NCTC 11168).